The sequence spans 201 residues: Small ribosomal subunit protein uS4c (201 aa).

The S4 RNA-binding domain maps to 89-150 (MRLDNIVFRL…RQKSQAIITK (62 aa)).

It belongs to the universal ribosomal protein uS4 family. As to quaternary structure, part of the 30S ribosomal subunit. Contacts protein S5. The interaction surface between S4 and S5 is involved in control of translational fidelity.

Its subcellular location is the plastid. The protein resides in the chloroplast. One of the primary rRNA binding proteins, it binds directly to 16S rRNA where it nucleates assembly of the body of the 30S subunit. Its function is as follows. With S5 and S12 plays an important role in translational accuracy. In Funaria hygrometrica (Moss), this protein is Small ribosomal subunit protein uS4c (rps4).